A 227-amino-acid chain; its full sequence is Cytochrome c oxidase subunit 2 (227 aa).

Residues 1–26 (MSTWKNLFLQDSASPLMELLMCFHDH) lie on the Mitochondrial intermembrane side of the membrane. The chain crosses the membrane as a helical span at residues 27–48 (AMLILILITIMVSQMLLSMLFN). The Mitochondrial matrix portion of the chain corresponds to 49-62 (KLSHRYLLEGQLIE). The helical transmembrane segment at 63 to 82 (TIWTIIPAIILILIALPSLR) threads the bilayer. Over 83 to 227 (LLYILDEINN…LFLNWVISKA (145 aa)) the chain is Mitochondrial intermembrane. 6 residues coordinate Cu cation: H161, C196, E198, C200, H204, and M207. E198 provides a ligand contact to Mg(2+).

The protein belongs to the cytochrome c oxidase subunit 2 family. Component of the cytochrome c oxidase (complex IV, CIV), a multisubunit enzyme composed of a catalytic core of 3 subunits and several supernumerary subunits. The complex exists as a monomer or a dimer and forms supercomplexes (SCs) in the inner mitochondrial membrane with ubiquinol-cytochrome c oxidoreductase (cytochrome b-c1 complex, complex III, CIII). It depends on Cu cation as a cofactor.

The protein resides in the mitochondrion inner membrane. It catalyses the reaction 4 Fe(II)-[cytochrome c] + O2 + 8 H(+)(in) = 4 Fe(III)-[cytochrome c] + 2 H2O + 4 H(+)(out). Functionally, component of the cytochrome c oxidase, the last enzyme in the mitochondrial electron transport chain which drives oxidative phosphorylation. The respiratory chain contains 3 multisubunit complexes succinate dehydrogenase (complex II, CII), ubiquinol-cytochrome c oxidoreductase (cytochrome b-c1 complex, complex III, CIII) and cytochrome c oxidase (complex IV, CIV), that cooperate to transfer electrons derived from NADH and succinate to molecular oxygen, creating an electrochemical gradient over the inner membrane that drives transmembrane transport and the ATP synthase. Cytochrome c oxidase is the component of the respiratory chain that catalyzes the reduction of oxygen to water. Electrons originating from reduced cytochrome c in the intermembrane space (IMS) are transferred via the dinuclear copper A center (CU(A)) of subunit 2 and heme A of subunit 1 to the active site in subunit 1, a binuclear center (BNC) formed by heme A3 and copper B (CU(B)). The BNC reduces molecular oxygen to 2 water molecules using 4 electrons from cytochrome c in the IMS and 4 protons from the mitochondrial matrix. The sequence is that of Cytochrome c oxidase subunit 2 (COII) from Sitophilus granarius (Granary weevil).